A 932-amino-acid chain; its full sequence is GPI ethanolamine phosphate transferase 1 (932 aa).

Topologically, residues 1–8 (MISLNKKL) are cytoplasmic. Residues 9–29 (VLLVGVIFHVAFMWSIFDIYF) traverse the membrane as a helical segment. Topologically, residues 30-456 (VSPLIHGMKH…TYNWLFLRTL (427 aa)) are lumenal. N-linked (GlcNAc...) asparagine glycosylation is found at N138, N202, and N360. A helical membrane pass occupies residues 457–477 (VTIGFFGWIAVAFCSYLLAFV). The Cytoplasmic portion of the chain corresponds to 478–486 (VQSDKPFTT). The chain crosses the membrane as a helical span at residues 487–507 (SLPLKGVAYVALAILSGFFVF). At 508–509 (QK) the chain is on the lumenal side. A helical transmembrane segment spans residues 510-530 (SPLHYHLYAVFPVVFWEAVLQ). Residues 531–551 (RRTAVAEGISILARRSTSKAP) lie on the Cytoplasmic side of the membrane. A helical membrane pass occupies residues 552–572 (ALAAILDIGLSLVLLEAIVYG). The Lumenal portion of the chain corresponds to 573–577 (YFHRE). Residues 578–598 (IFSVCFGLATLWPFVHNFTVA) traverse the membrane as a helical segment. Residues 599–603 (KREWP) lie on the Cytoplasmic side of the membrane. The helical transmembrane segment at 604-624 (TTLAWVVMCAIMSSFTLLEVV) threads the bilayer. Residues 625–627 (KVE) are Lumenal-facing. The helical transmembrane segment at 628–648 (SIEQILLSGALMLVIGLVFTI) threads the bilayer. The Cytoplasmic portion of the chain corresponds to 649–653 (HLQRK). Residues 654-674 (LALAASTVCVLFAQILLVVAT) form a helical membrane-spanning segment. At 675–696 (MYFTRESVESLTARNGLPLFSQ) the chain is on the lumenal side. Residues 697-717 (VGGWISLLLSLAVPFLHFLGS) traverse the membrane as a helical segment. The Cytoplasmic portion of the chain corresponds to 718–737 (DAKDYRLRLLIIFLAFGPTF). The chain crosses the membrane as a helical span at residues 738–758 (VILTISWEGFFYVCFFAILVI). At 759 to 786 (WIELETQMRDARVTPQTRADLTPGDFRM) the chain is on the lumenal side. The chain crosses the membrane as a helical span at residues 787 to 807 (ALFTFFMSQIGFFGIGNIASI). Over 808–828 (SSFSLDSVYRLIPVFDPFSMG) the chain is Cytoplasmic. A helical membrane pass occupies residues 829 to 849 (ALLMFKILVPFAVLSACLGIL). The Lumenal segment spans residues 850-859 (NLKLGVPPSA). A helical transmembrane segment spans residues 860–880 (LFSMVLCVSDILTLNFFYLVV). Over 881–900 (DEGSWLDIGTGISHYCIASG) the chain is Cytoplasmic. The chain crosses the membrane as a helical span at residues 901–921 (LSLFMMVLEYLSGVLVAGVTI). The Lumenal segment spans residues 922-932 (APHVSKIKKDM).

The protein belongs to the PIGG/PIGN/PIGO family. PIGN subfamily.

Its subcellular location is the endoplasmic reticulum membrane. It participates in glycolipid biosynthesis; glycosylphosphatidylinositol-anchor biosynthesis. In terms of biological role, ethanolamine phosphate transferase involved in glycosylphosphatidylinositol-anchor biosynthesis. Transfers ethanolamine phosphate to the first alpha-1,4-linked mannose of the glycosylphosphatidylinositol precursor of GPI-anchor. The polypeptide is GPI ethanolamine phosphate transferase 1 (MCD4) (Yarrowia lipolytica (strain CLIB 122 / E 150) (Yeast)).